A 375-amino-acid polypeptide reads, in one-letter code: Growth/differentiation factor 8 (375 aa).

Residues 1–23 (MQKLAVYVYIYLFMLISVDPVAL) form the signal peptide. Positions 24 to 266 (DDGSQPTENA…VTDTPKRSRR (243 aa)) are excised as a propeptide. Residue asparagine 71 is glycosylated (N-linked (GlcNAc...) asparagine). Cystine bridges form between cysteine 272–cysteine 282, cysteine 281–cysteine 340, cysteine 309–cysteine 372, and cysteine 313–cysteine 374.

This sequence belongs to the TGF-beta family. As to quaternary structure, homodimer; disulfide-linked.

The protein resides in the secreted. Acts specifically as a negative regulator of skeletal muscle growth. This chain is Growth/differentiation factor 8 (MSTN), found in Anser anser anser (Western greylag goose).